The following is a 168-amino-acid chain: MIIGIWAEDEAGLIGEADKMPWSLPAEQQHFKETTMNQVILMGRKTFEGMNKRVLPGRISIILTRDETYQSDNEKVLIMHSPKEVLDWYHKQNKDLFITGGAEILALFESELELLYRTVVHEKFKGDTYFPSTFDFGRFKLVSEKFHDKDERNSYTFTIKKYEKVKQP.

The 164-residue stretch at 1–164 (MIIGIWAEDE…YTFTIKKYEK (164 aa)) folds into the DHFR domain. 5–7 (IWA) contributes to the substrate binding site. NADP(+) is bound by residues 6–7 (WA) and 14–19 (IGEADK). A substrate-binding site is contributed by E27. NADP(+) is bound at residue 43-46 (GRKT). R58 provides a ligand contact to substrate. NADP(+) is bound by residues 63–66 (LTRD) and 99–104 (TGGAEI). T118 provides a ligand contact to substrate.

Belongs to the dihydrofolate reductase family.

It catalyses the reaction (6S)-5,6,7,8-tetrahydrofolate + NADP(+) = 7,8-dihydrofolate + NADPH + H(+). It functions in the pathway cofactor biosynthesis; tetrahydrofolate biosynthesis; 5,6,7,8-tetrahydrofolate from 7,8-dihydrofolate: step 1/1. Functionally, key enzyme in folate metabolism. Catalyzes an essential reaction for de novo glycine and purine synthesis, and for DNA precursor synthesis. The polypeptide is Dihydrofolate reductase (folA) (Lactococcus lactis subsp. lactis (strain IL1403) (Streptococcus lactis)).